The sequence spans 456 residues: MVPHGSCPSGAREVTFEGWRRERGEASMSDVHRTIRVNRSGSKFRRALSFFGPGYLVAVGYMDPGNWATSLAGGSRFGYALLSVVLLSNLMAVLLQALCTRLAVATGRDLAQACRDAYPRFLAWPLWLLAELAICATDLAEVIGTAIGLNLLFGIPLEIGVILTAVDVLLVLYLQNKGFRRVEALIITLLGVIALCFLTQIIMAQPQWGEVIKGFAPTTEIVSNPDMLYIALGIIGATVMPHNLYLHSGIVQTRDYGHTTAEKREAIRYATLDSTIALTFALVINASILILAAASFHATGHTGVEDLDKAHALLNPLLGSAIAPALFAIALLCCGLNSTITATMAGQIVMEGFIDIRLKPWIRRAITRFVAIVPAAIVTILYGSQGTTELLILSQVVLSLQLPFAVIPLVIFTAQKKKMGSLAAAPWVTFLAAITAAIIVVLNLKLIYDFFTGAPI.

The next 11 helical transmembrane spans lie at 47–67 (ALSF…PGNW), 77–97 (FGYA…LLQA), 123–143 (AWPL…AEVI), 151–171 (LLFG…VLLV), 184–204 (ALII…IIMA), 227–247 (MLYI…LYLH), 276–296 (IALT…AASF), 316–336 (PLLG…CCGL), 369–389 (FVAI…GTTE), 392–412 (ILSQ…LVIF), and 422–442 (LAAA…IVVL).

Belongs to the NRAMP family.

It localises to the cell inner membrane. Functionally, h(+)-stimulated, divalent metal cation uptake system. The sequence is that of Divalent metal cation transporter MntH from Brucella suis biovar 1 (strain 1330).